The following is a 123-amino-acid chain: Small ribosomal subunit protein uS11 (123 aa).

Belongs to the universal ribosomal protein uS11 family. Part of the 30S ribosomal subunit. Interacts with proteins S7 and S18. Binds to IF-3.

Functionally, located on the platform of the 30S subunit, it bridges several disparate RNA helices of the 16S rRNA. Forms part of the Shine-Dalgarno cleft in the 70S ribosome. The protein is Small ribosomal subunit protein uS11 of Coxiella burnetii (strain CbuG_Q212) (Coxiella burnetii (strain Q212)).